A 261-amino-acid polypeptide reads, in one-letter code: Syntaxin-7 (261 aa).

Ser-2 carries the N-acetylserine modification. The Cytoplasmic segment spans residues 2–238 (SYTPGVGGDP…DYQRKSRKTL (237 aa)). Phosphothreonine is present on Thr-4. At Ser-45 the chain carries Phosphoserine. Residues 47-69 (ELRQQLQQKQQYTNQLAKETDKY) adopt a coiled-coil conformation. Ser-75 carries the phosphoserine modification. Position 79 is a phosphothreonine (Thr-79). 4 positions are modified to phosphoserine: Ser-125, Ser-126, Ser-129, and Ser-205. A disordered region spans residues 129–148 (SGSFPEDSSKERNLVSWESQ). One can recognise a t-SNARE coiled-coil homology domain in the interval 165-227 (LRLIHERESS…QQANQQLSRA (63 aa)). The chain crosses the membrane as a helical; Anchor for type IV membrane protein span at residues 239–259 (CIIILILVIGVAIISLIIWGL). At 260 to 261 (NH) the chain is on the vesicular side.

Belongs to the syntaxin family. Forms a SNARE complex with VTI1B, STX8 and VAMP8 which functions in the homotypic fusion of late endosomes. Component of the SNARE complex composed of STX7, STX8, VAMP7 and VTI1B that is required for heterotypic fusion of late endosomes with lysosomes. Interacts with VPS11, VPS16 and VPS18. Interacts with VPS33A. Interacts with TPC1. As to expression, highest expression is found in placenta followed by heart, skeletal muscle, kidney and brain. Low expression is found in pancreas, lung and liver.

Its subcellular location is the early endosome membrane. Functionally, may be involved in protein trafficking from the plasma membrane to the early endosome (EE) as well as in homotypic fusion of endocytic organelles. Mediates the endocytic trafficking from early endosomes to late endosomes and lysosomes. The sequence is that of Syntaxin-7 (STX7) from Homo sapiens (Human).